A 1083-amino-acid polypeptide reads, in one-letter code: LIM and calponin homology domains-containing protein 1 (1083 aa).

3 disordered regions span residues 1 to 22, 185 to 248, and 291 to 311; these read MASN…PPDT, SERS…VRKD, and REDY…ERPF. Residues 21–138 form the Calponin-homology (CH) domain; the sequence is DTACMEAQKW…TVYWLGKAAN (118 aa). Over residues 229–248 the composition is skewed to basic and acidic residues; it reads RGSDSESDLPHRRIPDVRKD. The stretch at 356 to 424 forms a coiled coil; it reads LARWKTRRRS…HVAYKNAKTR (69 aa). Low complexity predominate over residues 462-474; that stretch reads PSLLSSSEDPNPL. 4 disordered regions span residues 462–512, 625–661, 698–725, and 759–779; these read PSLL…LISP, QKDE…VPAV, KEAK…ENES, and SPAL…DPEE. Composition is skewed to polar residues over residues 478 to 512 and 640 to 657; these read RQQS…LISP and SVEQ…TTQA. A compositionally biased stretch (basic and acidic residues) spans 716–725; the sequence is ESSKIKENES. Residues 784–835 are a coiled coil; it reads QEKWQQEQERLLQERYQKEQEKLKEEWEKAQKEVEEEERKYYEEERKIIEDT. A disordered region spans residues 987–1006; that stretch reads KEETLNSSQSTSQCQSPNRS. Residues 991-1006 show a composition bias toward polar residues; the sequence is LNSSQSTSQCQSPNRS. Residues 1011–1077 enclose the LIM zinc-binding domain; sequence KLCSTCGLPL…NDCYVKSRTA (67 aa).

Belongs to the LIMCH1 family.

It is found in the cytoplasm. The protein localises to the cytoskeleton. Its subcellular location is the stress fiber. Functionally, actin stress fibers-associated protein that activates non-muscle myosin IIa. Through the activation of non-muscle myosin IIa, positively regulates actin stress fibers assembly and stabilizes focal adhesions. It therefore negatively regulates cell spreading and cell migration. This is LIM and calponin homology domains-containing protein 1 (limch1) from Xenopus laevis (African clawed frog).